The primary structure comprises 199 residues: Prolactin (199 aa).

C4 and C11 are oxidised to a cystine. Phosphoserine is present on residues S26, S34, and S90. 2 disulfides stabilise this stretch: C58–C174 and C191–C199.

Belongs to the somatotropin/prolactin family. In terms of assembly, interacts with PRLR.

It localises to the secreted. In terms of biological role, prolactin acts primarily on the mammary gland by promoting lactation. The protein is Prolactin (PRL) of Balaenoptera borealis (Sei whale).